We begin with the raw amino-acid sequence, 87 residues long: Toxin CsEv2 (87 aa).

A signal peptide spans 1–19; it reads MNSLLIITACLFLIGTVWA. The LCN-type CS-alpha/beta domain occupies 20 to 85; sequence KEGYLVNKST…TYPLPNKSCS (66 aa). Cystine bridges form between Cys31–Cys84, Cys35–Cys60, Cys44–Cys65, and Cys48–Cys67.

It belongs to the long (4 C-C) scorpion toxin superfamily. Sodium channel inhibitor family. Beta subfamily. Expressed by the venom gland.

The protein resides in the secreted. Functionally, beta toxins bind voltage-independently at site-4 of sodium channels (Nav) and shift the voltage of activation toward more negative potentials thereby affecting sodium channel activation and promoting spontaneous and repetitive firing. Induces immediate paralysis in crickets after injection, with a total paralysis occurring within 15-30 minutes and lasting for 1-2 hours. Is also lethal to vertebrate (chicks) when injected in very high dosages (more that 100 mg/kg). The chain is Toxin CsEv2 from Centruroides sculpturatus (Arizona bark scorpion).